The sequence spans 245 residues: 4-hydroxy-tetrahydrodipicolinate reductase (245 aa).

Residues 7–12 (GARGKV), 75–77 (GTT), and 102–105 (APNF) contribute to the NAD(+) site. H132 functions as the Proton donor/acceptor in the catalytic mechanism. (S)-2,3,4,5-tetrahydrodipicolinate is bound at residue H133. The active-site Proton donor is the K136. 142 to 143 (GT) is a (S)-2,3,4,5-tetrahydrodipicolinate binding site.

Belongs to the DapB family.

It localises to the cytoplasm. It catalyses the reaction (S)-2,3,4,5-tetrahydrodipicolinate + NAD(+) + H2O = (2S,4S)-4-hydroxy-2,3,4,5-tetrahydrodipicolinate + NADH + H(+). The catalysed reaction is (S)-2,3,4,5-tetrahydrodipicolinate + NADP(+) + H2O = (2S,4S)-4-hydroxy-2,3,4,5-tetrahydrodipicolinate + NADPH + H(+). The protein operates within amino-acid biosynthesis; L-lysine biosynthesis via DAP pathway; (S)-tetrahydrodipicolinate from L-aspartate: step 4/4. Catalyzes the conversion of 4-hydroxy-tetrahydrodipicolinate (HTPA) to tetrahydrodipicolinate. The chain is 4-hydroxy-tetrahydrodipicolinate reductase from Mycolicibacterium smegmatis (strain ATCC 700084 / mc(2)155) (Mycobacterium smegmatis).